Reading from the N-terminus, the 551-residue chain is Preprotein translocase subunit SCY1, chloroplastic (551 aa).

The N-terminal 67 residues, 1–67 (MITVSEVSSY…WNLGLVINSR (67 aa)), are a transit peptide targeting the chloroplast. A run of 10 helical transmembrane segments spans residues 142-162 (FLKLLGFLALSRLGIYIPLGG), 192-212 (LGICSLGIVPFINAQIVFQLL), 241-261 (ASVGFAIVQAIGQVFYLRPYV), 268-288 (WVVSSVTLLTLGSVLTTYIGE), 295-315 (LGNGTSLLIFTSIISYLPASF), 328-348 (YTGLGTIVVSFLLLVLGIVYV), 382-402 (SAGVMPIIFSTSSLALPATLA), 415-435 (FALTPGGSFYLPTNILLIAFF), 482-502 (VLGSAFLAVLAAGPAVVEQIT), and 503-523 (HLTAFRGFAGTSVLILVGCAT).

It belongs to the SecY/SEC61-alpha family. Part of the Sec protein translocation apparatus. Interacts with SECE1, ALB3 and probably with SECA1.

The protein localises to the plastid. The protein resides in the chloroplast thylakoid membrane. In terms of biological role, involved in protein export. Probably interacts with other proteins to allow the translocation of proteins across the chloroplast thylakoid membranes. Required for normal greening during embryogenesis. Central subunit of the protein translocation channel SecYE. Consists of two halves formed by TMs 1-5 and 6-10. These two domains form a lateral gate at the front which open onto the bilayer between TMs 2 and 7, and are clamped together by SecE at the back. The channel is closed by both a pore ring composed of hydrophobic SecY resides and a short helix (helix 2A) on the extracellular side of the membrane which forms a plug. This is Preprotein translocase subunit SCY1, chloroplastic (SCY1) from Arabidopsis thaliana (Mouse-ear cress).